A 431-amino-acid polypeptide reads, in one-letter code: O-phosphoseryl-tRNA(Sec) selenium transferase (431 aa).

The segment at M1–E36 is tetramerization. A pyridoxal 5'-phosphate-binding site is contributed by R67. Positions G88 to P98 are phosphate loop (P-loop). Substrate-binding residues include R89, S90, and Q97. K269 bears the N6-(pyridoxal phosphate)lysine mark. R298 is a binding site for substrate.

This sequence belongs to the SepSecS family. Homotetramer. The cofactor is pyridoxal 5'-phosphate.

The enzyme catalyses O-phospho-L-seryl-tRNA(Sec) + selenophosphate + H2O = L-selenocysteinyl-tRNA(Sec) + 2 phosphate. It functions in the pathway aminoacyl-tRNA biosynthesis; selenocysteinyl-tRNA(Sec) biosynthesis; selenocysteinyl-tRNA(Sec) from L-seryl-tRNA(Sec) (archaeal/eukaryal route): step 2/2. In terms of biological role, converts O-phosphoseryl-tRNA(Sec) to selenocysteinyl-tRNA(Sec) required for selenoprotein biosynthesis. The protein is O-phosphoseryl-tRNA(Sec) selenium transferase (spcS) of Methanopyrus kandleri (strain AV19 / DSM 6324 / JCM 9639 / NBRC 100938).